The sequence spans 705 residues: Calpastatin (705 aa).

Disordered stretches follow at residues 1–211 and 226–493; these read MNPT…PNDA and LTTC…PLPP. Basic and acidic residues-rich tracts occupy residues 7–17 and 24–62; these read KAVKTEPEKKP and VVHEKKTQEVKPKEHTEPKSLPKHSSDTGVKHAPKEKAV. Residue lysine 10 forms a Glycyl lysine isopeptide (Lys-Gly) (interchain with G-Cter in SUMO2) linkage. The residue at position 28 (lysine 28) is an N6-acetyllysine. Composition is skewed to low complexity over residues 63-72 and 94-103; these read SKSSEQPPSE and PAAAAAASAE. Residue serine 65 is modified to Phosphoserine. Threonine 115 bears the Phosphothreonine mark. Residues 135 to 151 show a composition bias toward acidic residues; that stretch reads TALDDLIDTLGEPEEMK. The Inhibitory domain 1 repeat unit spans residues 149–202; sequence EMKEDNTTYTGPEVSDPMSSTYIEELGKRESTPPPKYKELLNKEEGIAGPPPDS. Residues 173 to 194 show a composition bias toward basic and acidic residues; sequence ELGKRESTPPPKYKELLNKEEG. 2 positions are modified to phosphoserine: serine 202 and serine 230. The segment covering 234 to 248 has biased composition (basic and acidic residues); that stretch reads DGKETEKEKSTEEAL. The span at 275-286 shows a compositional bias: polar residues; it reads TEQALQALSASL. 2 stretches are compositionally biased toward basic and acidic residues: residues 289-317 and 327-352; these read RKPEPELDPSSIREVDEAKAKEEKVKKCG and YRLKPATDKDGKPLLPEAEEKPKPLS. The Inhibitory domain 2 repeat unit spans residues 292 to 344; it reads EPELDPSSIREVDEAKAKEEKVKKCGEDEETVPSEYRLKPATDKDGKPLLPEA. Phosphoserine occurs at positions 352, 354, and 361. Acidic residues predominate over residues 355 to 364; that stretch reads ELIDELSEDF. The segment covering 365–381 has biased composition (basic and acidic residues); the sequence is DQSKPTEKQSKPTEKTE. Serine 428 carries the phosphoserine modification. The span at 430–489 shows a compositional bias: basic and acidic residues; that stretch reads PKKEADPEDGKPVEDKVKEKAKEEDRENFGEKEETIPPDYRLEEAKDKDGKPLLPKEVKE. One copy of the Inhibitory domain 3 repeat lies at 434–487; sequence ADPEDGKPVEDKVKEKAKEEDRENFGEKEETIPPDYRLEEAKDKDGKPLLPKEV. Phosphoserine occurs at positions 504 and 515. Positions 527–705 are disordered; that stretch reads VSEVVSQTPA…KPKADGKSTS (179 aa). Positions 533–542 are enriched in low complexity; that stretch reads QTPAPTTQAA. Residue serine 563 is modified to Phosphoserine. One copy of the Inhibitory domain 4 repeat lies at 571 to 624; that stretch reads PDPDENKPVEDKVKEKAKAEHRDKLGERDDTIPPKYQHLLDDNKEGTPGKPKDQ. Positions 571 to 625 are enriched in basic and acidic residues; the sequence is PDPDENKPVEDKVKEKAKAEHRDKLGERDDTIPPKYQHLLDDNKEGTPGKPKDQR. Residues 651 to 662 show a composition bias toward low complexity; it reads DSCPSTTETSTD. Over residues 683–705 the composition is skewed to basic and acidic residues; the sequence is KAKDSTKAKEETSKPKADGKSTS.

It belongs to the protease inhibitor I27 (calpastatin) family.

Specific inhibition of calpain (calcium-dependent cysteine protease). Plays a key role in postmortem tenderization of meat and have been proposed to be involved in muscle protein degradation in living tissue. This is Calpastatin (CAST) from Bos taurus (Bovine).